The following is a 131-amino-acid chain: GATA zinc finger domain-containing protein 2 (131 aa).

The segment covering 21–55 has biased composition (low complexity); it reads STATDATSADGAASETDAASATDTTSATDPTSATD. Residues 21 to 85 are disordered; that stretch reads STATDATSAD…RGRPYISTPP (65 aa). Polar residues predominate over residues 57–74; the sequence is IATTNTTGITSSGPTTNG. The GATA-type zinc finger occupies 88 to 115; sequence CYDCGRTRSPYWRKGTYNGQVVHLCNAC.

The protein is GATA zinc finger domain-containing protein 2 (comH) of Dictyostelium discoideum (Social amoeba).